The chain runs to 245 residues: Glutathione S-transferase T1 (245 aa).

Positions 2-83 constitute a GST N-terminal domain; that stretch reads MKLKVYADRM…YLSSAFPSVA (82 aa). Glutathione contacts are provided by residues 12 to 13, 41 to 42, 54 to 55, and 67 to 68; these read SQ, QL, KV, and ES. Residues 90 to 233 enclose the GST C-terminal domain; that stretch reads DLSKRAKIHS…KEGFQKRREM (144 aa). Positions 243–245 match the Microbody targeting signal motif; it reads SKI.

This sequence belongs to the GST superfamily. Theta family.

The protein resides in the nucleus. It is found in the peroxisome. It carries out the reaction RX + glutathione = an S-substituted glutathione + a halide anion + H(+). In vitro, possesses glutathione S-transferase activity toward 1-chloro-2,4-dinitrobenzene (CDNB) and p-nitrobenzyl chloride (pNBC), and glutathione peroxidase activity toward cumene hydroperoxide and linoleic acid-13-hydroperoxide. May be involved in the conjugation of reduced glutathione to a wide number of exogenous and endogenous hydrophobic electrophiles and have a detoxification role against certain herbicides. This Arabidopsis thaliana (Mouse-ear cress) protein is Glutathione S-transferase T1 (GSTT1).